Reading from the N-terminus, the 60-residue chain is Short neurotoxin 1 (60 aa).

Intrachain disulfides connect cysteine 3-cysteine 22, cysteine 17-cysteine 39, cysteine 41-cysteine 52, and cysteine 53-cysteine 58.

This sequence belongs to the three-finger toxin family. Short-chain subfamily. Type I alpha-neurotoxin sub-subfamily. As to expression, expressed by the venom gland.

It is found in the secreted. Its function is as follows. Binds to muscle nicotinic acetylcholine receptor (nAChR) and inhibit acetylcholine from binding to the receptor, thereby impairing neuromuscular transmission. The protein is Short neurotoxin 1 of Dendroaspis polylepis polylepis (Black mamba).